A 271-amino-acid polypeptide reads, in one-letter code: 5-deoxy-glucuronate isomerase (271 aa).

This sequence belongs to the isomerase IolB family.

The enzyme catalyses 5-deoxy-D-glucuronate = 5-dehydro-2-deoxy-D-gluconate. The protein operates within polyol metabolism; myo-inositol degradation into acetyl-CoA; acetyl-CoA from myo-inositol: step 4/7. Functionally, involved in the isomerization of 5-deoxy-glucuronate (5DG) to 5-dehydro-2-deoxy-D-gluconate (DKG or 2-deoxy-5-keto-D-gluconate). This Bacillus licheniformis (strain ATCC 14580 / DSM 13 / JCM 2505 / CCUG 7422 / NBRC 12200 / NCIMB 9375 / NCTC 10341 / NRRL NRS-1264 / Gibson 46) protein is 5-deoxy-glucuronate isomerase.